The sequence spans 924 residues: Autophagy-related protein 9B (924 aa).

The tract at residues Met1 to Pro144 is disordered. The Cytoplasmic segment spans residues Met1–Gly207. Over residues Trp17 to Leu27 the composition is skewed to low complexity. Residues Leu28–Cys40 are compositionally biased toward pro residues. Polar residues predominate over residues Leu78–His88. The segment covering Pro98–Ser113 has biased composition (low complexity). Positions Tyr151–Leu154 match the Tyrosine-based sorting signal motif. A helical membrane pass occupies residues Phe208–Phe228. Residues Thr229 to Arg276 lie on the Lumenal side of the membrane. The helical transmembrane segment at Ser277–Leu297 threads the bilayer. Residues Arg298–Thr438 lie on the Cytoplasmic side of the membrane. Residues Val439 to Leu459 lie within the membrane without spanning it. Residues His460–Leu526 are Cytoplasmic-facing. A helical transmembrane segment spans residues Leu527–Val547. Residues Tyr548–Asp551 are Lumenal-facing. Residues Val552–Ala572 traverse the membrane as a helical segment. At Arg573–Ala624 the chain is on the cytoplasmic side. The stretch at Val625–Phe645 is an intramembrane region. The Cytoplasmic portion of the chain corresponds to Arg646–Asp924. Residues Gln847–Asp924 form a disordered region. The span at Ser878–Pro890 shows a compositional bias: low complexity. Positions Thr913–Asp924 are enriched in basic and acidic residues.

This sequence belongs to the ATG9 family. As to quaternary structure, homotrimer; forms a homotrimer with a central pore that forms a path between the two membrane leaflets. As to expression, highly expressed in placenta (trophoblast cells) and pituitary gland. Not expressed in vascular endothelial.

Its subcellular location is the preautophagosomal structure membrane. It carries out the reaction a 1,2-diacyl-sn-glycero-3-phosphocholine(in) = a 1,2-diacyl-sn-glycero-3-phosphocholine(out). The catalysed reaction is a 1,2-diacyl-sn-glycero-3-phospho-L-serine(in) = a 1,2-diacyl-sn-glycero-3-phospho-L-serine(out). It catalyses the reaction a 1,2-diacyl-sn-glycero-3-phosphoethanolamine(in) = a 1,2-diacyl-sn-glycero-3-phosphoethanolamine(out). Its function is as follows. Phospholipid scramblase involved in autophagy by mediating autophagosomal membrane expansion. Cycles between the preautophagosomal structure/phagophore assembly site (PAS) and the cytoplasmic vesicle pool and supplies membrane for the growing autophagosome. Lipid scramblase activity plays a key role in preautophagosomal structure/phagophore assembly by distributing the phospholipids that arrive through ATG2 (ATG2A or ATG2B) from the cytoplasmic to the luminal leaflet of the bilayer, thereby driving autophagosomal membrane expansion. In addition to autophagy, also plays a role in necrotic cell death. The polypeptide is Autophagy-related protein 9B (ATG9B) (Homo sapiens (Human)).